Reading from the N-terminus, the 641-residue chain is 1-deoxy-D-xylulose-5-phosphate synthase (641 aa).

Thiamine diphosphate is bound by residues His-79 and 120–122 (AHS). Asp-151 provides a ligand contact to Mg(2+). Thiamine diphosphate is bound by residues 152 to 153 (GA), Asn-180, Tyr-290, and Glu-372. A Mg(2+)-binding site is contributed by Asn-180.

This sequence belongs to the transketolase family. DXPS subfamily. In terms of assembly, homodimer. It depends on Mg(2+) as a cofactor. Thiamine diphosphate serves as cofactor.

It catalyses the reaction D-glyceraldehyde 3-phosphate + pyruvate + H(+) = 1-deoxy-D-xylulose 5-phosphate + CO2. Its pathway is metabolic intermediate biosynthesis; 1-deoxy-D-xylulose 5-phosphate biosynthesis; 1-deoxy-D-xylulose 5-phosphate from D-glyceraldehyde 3-phosphate and pyruvate: step 1/1. Its function is as follows. Catalyzes the acyloin condensation reaction between C atoms 2 and 3 of pyruvate and glyceraldehyde 3-phosphate to yield 1-deoxy-D-xylulose-5-phosphate (DXP). In Bradyrhizobium sp. (strain BTAi1 / ATCC BAA-1182), this protein is 1-deoxy-D-xylulose-5-phosphate synthase.